Here is a 215-residue protein sequence, read N- to C-terminus: Cytochrome b6 (215 aa).

The helical transmembrane segment at Ile32–Phe52 threads the bilayer. Cys35 is a binding site for heme c. Positions 86 and 100 each coordinate heme b. 3 helical membrane passes run Ala90–Phe110, Leu116–Tyr136, and Leu186–Ile206. Heme b-binding residues include His187 and His202.

Belongs to the cytochrome b family. PetB subfamily. The 4 large subunits of the cytochrome b6-f complex are cytochrome b6, subunit IV (17 kDa polypeptide, PetD), cytochrome f and the Rieske protein, while the 4 small subunits are PetG, PetL, PetM and PetN. The complex functions as a dimer. The cofactor is heme b. Heme c serves as cofactor.

Its subcellular location is the cellular thylakoid membrane. Functionally, component of the cytochrome b6-f complex, which mediates electron transfer between photosystem II (PSII) and photosystem I (PSI), cyclic electron flow around PSI, and state transitions. The sequence is that of Cytochrome b6 from Acaryochloris marina (strain MBIC 11017).